The following is a 931-amino-acid chain: Valine--tRNA ligase (931 aa).

Residues 42–52 (PNVTGSLHMGH) carry the 'HIGH' region motif. Positions 523-527 (KMSKS) match the 'KMSKS' region motif. Position 526 (Lys-526) interacts with ATP. Residues 859–931 (MAGLIDKEAE…EEQLEKIKYL (73 aa)) adopt a coiled-coil conformation.

Belongs to the class-I aminoacyl-tRNA synthetase family. ValS type 1 subfamily. In terms of assembly, monomer.

It is found in the cytoplasm. It carries out the reaction tRNA(Val) + L-valine + ATP = L-valyl-tRNA(Val) + AMP + diphosphate. Functionally, catalyzes the attachment of valine to tRNA(Val). As ValRS can inadvertently accommodate and process structurally similar amino acids such as threonine, to avoid such errors, it has a 'posttransfer' editing activity that hydrolyzes mischarged Thr-tRNA(Val) in a tRNA-dependent manner. This Alcanivorax borkumensis (strain ATCC 700651 / DSM 11573 / NCIMB 13689 / SK2) protein is Valine--tRNA ligase.